We begin with the raw amino-acid sequence, 359 residues long: UDP-N-acetylglucosamine--N-acetylmuramyl-(pentapeptide) pyrophosphoryl-undecaprenol N-acetylglucosamine transferase (359 aa).

Residues 13–15 (TAG), N125, R161, S193, I241, and Q285 contribute to the UDP-N-acetyl-alpha-D-glucosamine site.

The protein belongs to the glycosyltransferase 28 family. MurG subfamily.

The protein resides in the cell membrane. It catalyses the reaction di-trans,octa-cis-undecaprenyl diphospho-N-acetyl-alpha-D-muramoyl-L-alanyl-D-glutamyl-meso-2,6-diaminopimeloyl-D-alanyl-D-alanine + UDP-N-acetyl-alpha-D-glucosamine = di-trans,octa-cis-undecaprenyl diphospho-[N-acetyl-alpha-D-glucosaminyl-(1-&gt;4)]-N-acetyl-alpha-D-muramoyl-L-alanyl-D-glutamyl-meso-2,6-diaminopimeloyl-D-alanyl-D-alanine + UDP + H(+). It functions in the pathway cell wall biogenesis; peptidoglycan biosynthesis. In terms of biological role, cell wall formation. Catalyzes the transfer of a GlcNAc subunit on undecaprenyl-pyrophosphoryl-MurNAc-pentapeptide (lipid intermediate I) to form undecaprenyl-pyrophosphoryl-MurNAc-(pentapeptide)GlcNAc (lipid intermediate II). The chain is UDP-N-acetylglucosamine--N-acetylmuramyl-(pentapeptide) pyrophosphoryl-undecaprenol N-acetylglucosamine transferase from Corynebacterium diphtheriae (strain ATCC 700971 / NCTC 13129 / Biotype gravis).